A 434-amino-acid chain; its full sequence is GTPase Obg (434 aa).

An Obg domain is found at 1–158; it reads MFIDRAKIYV…RWLYLELKLL (158 aa). The OBG-type G domain maps to 159–328; that stretch reads ADVGLLGLPN…LLELMEKYVK (170 aa). GTP-binding positions include 165–172, 190–194, 211–214, 280–283, and 309–311; these read GLPNAGKS, FTTKT, DIPG, NKID, and SAK. 2 residues coordinate Mg(2+): Ser172 and Thr192. The OCT domain maps to 347-425; it reads KQENKKQEIP…IGNYVFKYNS (79 aa).

This sequence belongs to the TRAFAC class OBG-HflX-like GTPase superfamily. OBG GTPase family. Monomer. Requires Mg(2+) as cofactor.

The protein localises to the cytoplasm. Functionally, an essential GTPase which binds GTP, GDP and possibly (p)ppGpp with moderate affinity, with high nucleotide exchange rates and a fairly low GTP hydrolysis rate. Plays a role in control of the cell cycle, stress response, ribosome biogenesis and in those bacteria that undergo differentiation, in morphogenesis control. This Dictyoglomus turgidum (strain DSM 6724 / Z-1310) protein is GTPase Obg.